The primary structure comprises 396 residues: Phosphoglycerate kinase (396 aa).

Substrate contacts are provided by residues 21 to 23 (DFN), arginine 36, 59 to 62 (HLGR), arginine 118, and arginine 151. ATP is bound by residues lysine 201, glycine 292, glutamate 323, and 349 to 352 (GGDS).

This sequence belongs to the phosphoglycerate kinase family. In terms of assembly, monomer.

It is found in the cytoplasm. The catalysed reaction is (2R)-3-phosphoglycerate + ATP = (2R)-3-phospho-glyceroyl phosphate + ADP. It participates in carbohydrate degradation; glycolysis; pyruvate from D-glyceraldehyde 3-phosphate: step 2/5. The chain is Phosphoglycerate kinase from Leptospira interrogans serogroup Icterohaemorrhagiae serovar Lai (strain 56601).